Here is a 539-residue protein sequence, read N- to C-terminus: Beta-apo-4'-carotenal oxygenase (539 aa).

Catalysis depends on residues Glu-228 and Cys-262.

The protein belongs to the aldehyde dehydrogenase family.

The catalysed reaction is 4'-apo-beta-carotenal + NAD(+) + H2O = neurosporaxanthin + NADH + 2 H(+). Functionally, beta-apo-4'-carotenal oxygenase involved in the last step of synthesis of neurosporaxanthin, a carboxylic apocarotenoid acting as an essential protective pigments and leading to orange pigmentation. Converts the aldehyde beta-apo-4'-carotenal into neurosporaxanthin. Is also able to use shorter apocarotenals as substrates (such as beta-apo-8'-carotenal (C30), beta-apo-10'-carotenal (C27), or the acyclic apocarotenal apo-8'-lycopenal (C30)), indicating wide substrate specificity. Neurosporaxanthin is synthesized from geranyl-geranyl pyrophosphate (GGPP) through several enzymatic activities. Phytoene synthase activity performed by the bifunctional enzyme carAR first produces phytoene from geranyl-geranyl pyrophosphate (GGPP). The phytoene dehydrogenase carB then introduces 4 desaturations to lead to lycopene which is substrate of the carotene cyclase activity of carAR that leads to the production of gamma-carotene. CarB then performs a 5th desaturation reaction to yield torulene. Torulene is the substrate of the dioxidase carT that breaks the molecule, removing five carbon atoms to yield beta-apo-4'-carotenal, whereas the aldehyde dehydrogenase carD mediates the last step by converting beta-apo-4'-carotenal into neurosporaxanthin. This Gibberella fujikuroi (strain CBS 195.34 / IMI 58289 / NRRL A-6831) (Bakanae and foot rot disease fungus) protein is Beta-apo-4'-carotenal oxygenase.